Here is a 155-residue protein sequence, read N- to C-terminus: DNA-directed RNA polymerase II subunit rpb4 (155 aa).

The protein belongs to the eukaryotic RPB4 RNA polymerase subunit family. In terms of assembly, component of the RNA polymerase II (Pol II) complex consisting of 12 subunits. RPB4 and RPB7 form a subcomplex that protrudes from the 10-subunit Pol II core complex.

The protein resides in the nucleus. Its function is as follows. DNA-dependent RNA polymerase catalyzes the transcription of DNA into RNA using the four ribonucleoside triphosphates as substrates. Component of RNA polymerase II which synthesizes mRNA precursors and many functional non-coding RNAs. Pol II is the central component of the basal RNA polymerase II transcription machinery. It is composed of mobile elements that move relative to each other. RPB4 is part of a subcomplex with RPB7 that binds to a pocket formed by RPB1, RPB2 and RPB6 at the base of the clamp element. The RPB4-RPB7 subcomplex seems to lock the clamp via RPB7 in the closed conformation thus preventing double-stranded DNA to enter the active site cleft. The RPB4-RPB7 subcomplex binds single-stranded DNA and RNA. This chain is DNA-directed RNA polymerase II subunit rpb4 (polr2d), found in Dictyostelium discoideum (Social amoeba).